A 205-amino-acid polypeptide reads, in one-letter code: MTKRNEAKYKIDRRMGQNIWGRPKSPVNKREYGPGQHGQRRKGKLSDFGTQLRAKQKLKGYYANISERQFYAIYVEATRLKGDSGENLIGLLERRLDTVVYRAKFVPTMFAARQFINHGHVKVNGRRVNIPSYKLKVGDAIEVKDASKQLALVLEANQLAERDVPDFIDADHNKQTAKFVRIPHLADVPFAVQMEPHLIVEFYSR.

A disordered region spans residues 18 to 49; the sequence is NIWGRPKSPVNKREYGPGQHGQRRKGKLSDFG. Positions 94–157 constitute an S4 RNA-binding domain; sequence RRLDTVVYRA…KQLALVLEAN (64 aa).

Belongs to the universal ribosomal protein uS4 family. In terms of assembly, part of the 30S ribosomal subunit. Contacts protein S5. The interaction surface between S4 and S5 is involved in control of translational fidelity.

Its function is as follows. One of the primary rRNA binding proteins, it binds directly to 16S rRNA where it nucleates assembly of the body of the 30S subunit. In terms of biological role, with S5 and S12 plays an important role in translational accuracy. This is Small ribosomal subunit protein uS4 from Nitrobacter hamburgensis (strain DSM 10229 / NCIMB 13809 / X14).